The chain runs to 243 residues: BTB/POZ domain-containing protein At4g08455 (243 aa).

A coiled-coil region spans residues 19 to 51; sequence KECYVEAGETEEELKREIDDLKAKVAFLRLSSS. Positions 64-136 constitute a BTB domain; that stretch reads TDVVLIASED…LYTAEACLDE (73 aa).

In terms of assembly, interacts with CUL3A and CUL3B.

Its pathway is protein modification; protein ubiquitination. In terms of biological role, may act as a substrate-specific adapter of an E3 ubiquitin-protein ligase complex (CUL3-RBX1-BTB) which mediates the ubiquitination and subsequent proteasomal degradation of target proteins. The protein is BTB/POZ domain-containing protein At4g08455 of Arabidopsis thaliana (Mouse-ear cress).